The following is a 593-amino-acid chain: Phosphoinositide phosphatase SAC6 (593 aa).

Residues 128–456 (LSVAERTTGL…GDDISIQYSG (329 aa)) form the SAC domain. Residues 391-402 (RTNCIDCLDRTN) carry the Phosphatase catalytic core motif. The next 2 helical transmembrane spans lie at 526 to 546 (AVAN…FATM) and 555 to 575 (YKHL…AALV).

As to expression, predominantly expressed in flowers.

The protein localises to the endoplasmic reticulum membrane. Phosphoinositide phosphatase that hydrolyzes PtdIns(3)P and PtdIns(4)P. Involved in priming for different defense responses. This is Phosphoinositide phosphatase SAC6 (SAC6) from Arabidopsis thaliana (Mouse-ear cress).